The sequence spans 128 residues: MFAVIKTGGRQYRVVPEDVLEVGKIEGDVGTIVQLGEVLMLGGDTPLIGLPTVAGASVAAEVLDHKRGPKVISFKKRRRKNSKRKRGYRDEITVLRITEILADGKSPSVGPRPKRVKAEPAPAADAAE.

The segment at 104-128 (GKSPSVGPRPKRVKAEPAPAADAAE) is disordered. A compositionally biased stretch (low complexity) spans 119 to 128 (EPAPAADAAE).

This sequence belongs to the bacterial ribosomal protein bL21 family. In terms of assembly, part of the 50S ribosomal subunit. Contacts protein L20.

Functionally, this protein binds to 23S rRNA in the presence of protein L20. The polypeptide is Large ribosomal subunit protein bL21 (Rhodopseudomonas palustris (strain HaA2)).